The chain runs to 121 residues: Small ribosomal subunit protein uS13 (121 aa).

Residues R93 to K121 form a disordered region. Positions A106–K121 are enriched in basic residues.

This sequence belongs to the universal ribosomal protein uS13 family. Part of the 30S ribosomal subunit. Forms a loose heterodimer with protein S19. Forms two bridges to the 50S subunit in the 70S ribosome.

In terms of biological role, located at the top of the head of the 30S subunit, it contacts several helices of the 16S rRNA. In the 70S ribosome it contacts the 23S rRNA (bridge B1a) and protein L5 of the 50S subunit (bridge B1b), connecting the 2 subunits; these bridges are implicated in subunit movement. Contacts the tRNAs in the A and P-sites. The chain is Small ribosomal subunit protein uS13 from Bacillus licheniformis (strain ATCC 14580 / DSM 13 / JCM 2505 / CCUG 7422 / NBRC 12200 / NCIMB 9375 / NCTC 10341 / NRRL NRS-1264 / Gibson 46).